The chain runs to 135 residues: Phosphoribosyl-AMP cyclohydrolase (135 aa).

Asp78 is a Mg(2+) binding site. Zn(2+) is bound at residue Cys79. The Mg(2+) site is built by Asp80 and Asp82. Zn(2+)-binding residues include Cys96 and Cys103.

Belongs to the PRA-CH family. Homodimer. The cofactor is Mg(2+). It depends on Zn(2+) as a cofactor.

Its subcellular location is the cytoplasm. The catalysed reaction is 1-(5-phospho-beta-D-ribosyl)-5'-AMP + H2O = 1-(5-phospho-beta-D-ribosyl)-5-[(5-phospho-beta-D-ribosylamino)methylideneamino]imidazole-4-carboxamide. It participates in amino-acid biosynthesis; L-histidine biosynthesis; L-histidine from 5-phospho-alpha-D-ribose 1-diphosphate: step 3/9. Functionally, catalyzes the hydrolysis of the adenine ring of phosphoribosyl-AMP. In Cupriavidus metallidurans (strain ATCC 43123 / DSM 2839 / NBRC 102507 / CH34) (Ralstonia metallidurans), this protein is Phosphoribosyl-AMP cyclohydrolase.